A 127-amino-acid chain; its full sequence is UPF0102 protein Mmwyl1_2395 (127 aa).

The protein belongs to the UPF0102 family.

This chain is UPF0102 protein Mmwyl1_2395, found in Marinomonas sp. (strain MWYL1).